The chain runs to 310 residues: HPr kinase/phosphorylase (310 aa).

Catalysis depends on residues histidine 138 and lysine 159. An ATP-binding site is contributed by 153–160 (GASGIGKS). Position 160 (serine 160) interacts with Mg(2+). Catalysis depends on aspartate 177, which acts as the Proton acceptor; for phosphorylation activity. Proton donor; for dephosphorylation activity. Positions 201–210 (IEIRGVGIID) are important for the catalytic mechanism of both phosphorylation and dephosphorylation. Glutamate 202 is a binding site for Mg(2+). Arginine 243 is a catalytic residue. The segment at 264 to 269 (PVKTGR) is important for the catalytic mechanism of dephosphorylation.

It belongs to the HPrK/P family. In terms of assembly, homohexamer. Requires Mg(2+) as cofactor.

The enzyme catalyses [HPr protein]-L-serine + ATP = [HPr protein]-O-phospho-L-serine + ADP + H(+). It catalyses the reaction [HPr protein]-O-phospho-L-serine + phosphate + H(+) = [HPr protein]-L-serine + diphosphate. Catalyzes the ATP- as well as the pyrophosphate-dependent phosphorylation of a specific serine residue in HPr, a phosphocarrier protein of the phosphoenolpyruvate-dependent sugar phosphotransferase system (PTS). HprK/P also catalyzes the pyrophosphate-producing, inorganic phosphate-dependent dephosphorylation (phosphorolysis) of seryl-phosphorylated HPr (P-Ser-HPr). The two antagonistic activities of HprK/P are regulated by several intracellular metabolites, which change their concentration in response to the absence or presence of rapidly metabolisable carbon sources (glucose, fructose, etc.) in the growth medium. Therefore, by controlling the phosphorylation state of HPr, HPrK/P is a sensor enzyme that plays a major role in the regulation of carbon metabolism and sugar transport: it mediates carbon catabolite repression (CCR), and regulates PTS-catalyzed carbohydrate uptake and inducer exclusion. This chain is HPr kinase/phosphorylase, found in Lactococcus lactis subsp. cremoris (strain MG1363).